Reading from the N-terminus, the 132-residue chain is Monothiol glutaredoxin-S9 (132 aa).

Residues 16–38 are disordered; it reads ASRPATAAAAPPPPPPRGEEEEV. One can recognise a Glutaredoxin domain in the interval 35 to 131; that stretch reads EEEVRRAVAE…PILKEAGALW (97 aa). Cysteine 55 is a binding site for [2Fe-2S] cluster. A Responsive for interaction with TGA factors motif is present at residues 129–132; it reads ALWL.

This sequence belongs to the glutaredoxin family. CC-type subfamily.

It localises to the cytoplasm. The protein localises to the nucleus. Functionally, may only reduce GSH-thiol disulfides, but not protein disulfides. The sequence is that of Monothiol glutaredoxin-S9 (GRXS9) from Oryza sativa subsp. japonica (Rice).